The following is a 233-amino-acid chain: C-type lectin domain family 2 member D2 (233 aa).

Positions 1–34 (MPSSAHLQDAPPLLSRTLTQDEEQTSLRQSSSCG) are disordered. The Cytoplasmic segment spans residues 1–76 (MPSSAHLQDA…SPESPAKLPC (76 aa)). A helical; Signal-anchor for type II membrane protein transmembrane segment spans residues 77 to 97 (CYGVIMVLSVAVVALSVALSV). The Extracellular portion of the chain corresponds to 98-233 (KKTPQILTVK…KPNSYTSQCQ (136 aa)). A C-type lectin domain is found at 119-228 (VGNKCYYFNE…KSICSKPNSY (110 aa)). A glycan (N-linked (GlcNAc...) asparagine) is linked at Asn132.

The protein resides in the cell membrane. Its function is as follows. Lectin-type cell surface receptor. This chain is C-type lectin domain family 2 member D2 (Clec2d2), found in Rattus norvegicus (Rat).